The following is a 349-amino-acid chain: DNA-directed RNA polymerase subunit alpha (349 aa).

Residues 1 to 226 (MLIAQRPTLV…GLFGLAQELN (226 aa)) form an alpha N-terminal domain (alpha-NTD) region. An alpha C-terminal domain (alpha-CTD) region spans residues 241–349 (AALAADLALP…GAEFVETEQY (109 aa)). The segment at 308–349 (LKDSPPGFDPRQAVDTYGTDSYNPAFSDPSDDGAEFVETEQY) is disordered. Over residues 336–349 (PSDDGAEFVETEQY) the composition is skewed to acidic residues.

Belongs to the RNA polymerase alpha chain family. Homodimer. The RNAP catalytic core consists of 2 alpha, 1 beta, 1 beta' and 1 omega subunit. When a sigma factor is associated with the core the holoenzyme is formed, which can initiate transcription.

The enzyme catalyses RNA(n) + a ribonucleoside 5'-triphosphate = RNA(n+1) + diphosphate. Functionally, DNA-dependent RNA polymerase catalyzes the transcription of DNA into RNA using the four ribonucleoside triphosphates as substrates. In Frankia alni (strain DSM 45986 / CECT 9034 / ACN14a), this protein is DNA-directed RNA polymerase subunit alpha.